Here is a 152-residue protein sequence, read N- to C-terminus: Putative pseudoazurin (152 aa).

An N-terminal signal peptide occupies residues 1-23; that stretch reads MPLKFGLIVATAALIASAASLMA. One can recognise a Plastocyanin-like domain in the interval 28–116; that stretch reads VQMLNKGTDG…MGMVALIQVG (89 aa). Cu cation contacts are provided by His-63, Cys-101, His-104, and Met-109.

Cu cation is required as a cofactor.

The protein resides in the periplasm. This soluble electron transfer copper protein is required for the inactivation of copper-containing nitrite reductase in the presence of oxygen. This chain is Putative pseudoazurin (azu), found in Rhizobium leguminosarum bv. viciae.